A 349-amino-acid chain; its full sequence is Anthranilate phosphoribosyltransferase (349 aa).

Residues Gly-82, 85–86 (GD), Thr-90, 92–95 (NVST), 110–118 (KHGNRSVSS), and Gly-122 contribute to the 5-phospho-alpha-D-ribose 1-diphosphate site. Gly-82 contributes to the anthranilate binding site. Ser-94 serves as a coordination point for Mg(2+). Asn-113 contributes to the anthranilate binding site. Anthranilate is bound at residue Arg-168. Positions 232 and 233 each coordinate Mg(2+).

It belongs to the anthranilate phosphoribosyltransferase family. In terms of assembly, homodimer. Requires Mg(2+) as cofactor.

It catalyses the reaction N-(5-phospho-beta-D-ribosyl)anthranilate + diphosphate = 5-phospho-alpha-D-ribose 1-diphosphate + anthranilate. The protein operates within amino-acid biosynthesis; L-tryptophan biosynthesis; L-tryptophan from chorismate: step 2/5. Catalyzes the transfer of the phosphoribosyl group of 5-phosphorylribose-1-pyrophosphate (PRPP) to anthranilate to yield N-(5'-phosphoribosyl)-anthranilate (PRA). In Methanosphaera stadtmanae (strain ATCC 43021 / DSM 3091 / JCM 11832 / MCB-3), this protein is Anthranilate phosphoribosyltransferase.